Reading from the N-terminus, the 396-residue chain is Elongation factor Tu 1 (396 aa).

In terms of domain architecture, tr-type G spans 10–206 (KPHVNVGTIG…TLDTYIPEPE (197 aa)). A G1 region spans residues 19–26 (GHVDHGKT). 19-26 (GHVDHGKT) contributes to the GTP binding site. A Mg(2+)-binding site is contributed by threonine 26. The segment at 60–64 (GITIN) is G2. Residues 81 to 84 (DCPG) form a G3 region. Residues 81–85 (DCPGH) and 136–139 (NKCD) contribute to the GTP site. Residues 136–139 (NKCD) form a G4 region. Positions 174–176 (SAL) are G5.

Belongs to the TRAFAC class translation factor GTPase superfamily. Classic translation factor GTPase family. EF-Tu/EF-1A subfamily. Monomer.

It localises to the cytoplasm. The catalysed reaction is GTP + H2O = GDP + phosphate + H(+). Functionally, GTP hydrolase that promotes the GTP-dependent binding of aminoacyl-tRNA to the A-site of ribosomes during protein biosynthesis. This is Elongation factor Tu 1 from Psychrobacter sp. (strain PRwf-1).